The primary structure comprises 329 residues: Malate dehydrogenase (329 aa).

NAD(+) is bound at residue 12 to 18 (GAAGQIG). Positions 95 and 101 each coordinate substrate. NAD(+) contacts are provided by residues Asn108, Gln115, and 132–134 (VGN). Substrate contacts are provided by Asn134 and Arg165. The active-site Proton acceptor is His190.

Belongs to the LDH/MDH superfamily. MDH type 2 family.

It carries out the reaction (S)-malate + NAD(+) = oxaloacetate + NADH + H(+). Catalyzes the reversible oxidation of malate to oxaloacetate. This is Malate dehydrogenase from Bordetella petrii (strain ATCC BAA-461 / DSM 12804 / CCUG 43448).